The sequence spans 290 residues: Glutaredoxin domain-containing cysteine-rich protein 1 (290 aa).

Residues 127–234 (LQQPSTDLEF…DILTKIERVQ (108 aa)) enclose the Glutaredoxin domain.

Belongs to the GRXCR1 family. Expressed at low levels in adult lung, brain and duodenum with moderate levels in testis. Highly expressed in fetal cochlea.

It localises to the cell projection. The protein resides in the stereocilium. It is found in the microvillus. Its subcellular location is the kinocilium. May play a role in actin filament architecture in developing stereocilia of sensory cells. This Homo sapiens (Human) protein is Glutaredoxin domain-containing cysteine-rich protein 1 (GRXCR1).